A 274-amino-acid polypeptide reads, in one-letter code: Shikimate dehydrogenase (NADP(+)) (274 aa).

Shikimate-binding positions include 20–22 and T68; that span reads SKS. K72 functions as the Proton acceptor in the catalytic mechanism. D84 contacts NADP(+). Residues N93 and D109 each coordinate shikimate. Residues 131–135 and L217 each bind NADP(+); that span reads GAGGA. Y219 is a shikimate binding site. NADP(+) is bound at residue G240.

It belongs to the shikimate dehydrogenase family. As to quaternary structure, homodimer.

It catalyses the reaction shikimate + NADP(+) = 3-dehydroshikimate + NADPH + H(+). Its pathway is metabolic intermediate biosynthesis; chorismate biosynthesis; chorismate from D-erythrose 4-phosphate and phosphoenolpyruvate: step 4/7. Involved in the biosynthesis of the chorismate, which leads to the biosynthesis of aromatic amino acids. Catalyzes the reversible NADPH linked reduction of 3-dehydroshikimate (DHSA) to yield shikimate (SA). This is Shikimate dehydrogenase (NADP(+)) from Sphingopyxis alaskensis (strain DSM 13593 / LMG 18877 / RB2256) (Sphingomonas alaskensis).